A 446-amino-acid chain; its full sequence is Transcriptional regulator STERILE APETALA (446 aa).

Over residues 1 to 10 the composition is skewed to low complexity; sequence MSTSSSSSDN. A disordered region spans residues 1 to 32; sequence MSTSSSSSDNGAGGSGGVFEAPSPSRPRRGAN.

In terms of tissue distribution, expressed in inflorescence and floral meristems, young floral organ primordia, and later in ovule primordia.

Its subcellular location is the nucleus. In terms of biological role, transcriptional regulator involved in the specification of floral identity. Acts as A class cadastral protein by repressing the C class floral homeotic gene AGAMOUS in the external flower organs in association with APETALA2 and other repressors. Is required to maintain floral meristem identity in concert with AGAMOUS. Also interacts with APETALA2 to ensure the normal development of ovule. The chain is Transcriptional regulator STERILE APETALA (SAP) from Arabidopsis thaliana (Mouse-ear cress).